Reading from the N-terminus, the 258-residue chain is Imidazole glycerol phosphate synthase subunit HisF (258 aa).

Catalysis depends on residues aspartate 11 and aspartate 130.

This sequence belongs to the HisA/HisF family. Heterodimer of HisH and HisF.

It is found in the cytoplasm. It carries out the reaction 5-[(5-phospho-1-deoxy-D-ribulos-1-ylimino)methylamino]-1-(5-phospho-beta-D-ribosyl)imidazole-4-carboxamide + L-glutamine = D-erythro-1-(imidazol-4-yl)glycerol 3-phosphate + 5-amino-1-(5-phospho-beta-D-ribosyl)imidazole-4-carboxamide + L-glutamate + H(+). It participates in amino-acid biosynthesis; L-histidine biosynthesis; L-histidine from 5-phospho-alpha-D-ribose 1-diphosphate: step 5/9. In terms of biological role, IGPS catalyzes the conversion of PRFAR and glutamine to IGP, AICAR and glutamate. The HisF subunit catalyzes the cyclization activity that produces IGP and AICAR from PRFAR using the ammonia provided by the HisH subunit. The protein is Imidazole glycerol phosphate synthase subunit HisF of Yersinia pseudotuberculosis serotype O:1b (strain IP 31758).